Here is a 590-residue protein sequence, read N- to C-terminus: Phosphate-repressible phosphate permease pho-4 (590 aa).

The next 8 helical transmembrane spans lie at 6-26 (FDYLLAIGTIFAALDAWNIGA), 44-64 (YLQAMILGSIMEFAGSVGVGA), 85-105 (ALLMLGMVCAVVASSIYLTMA), 118-138 (IMGGVIGMGIAAVGADGVQWV), 149-169 (VFLAWVIAPGLAGAFASIIFL), 186-206 (FVMVPIYFGITAALLCMLLLW), 220-240 (IAGTIIGVGAAWALLVTIFLM), and 246-266 (IVILEDWQLRFWHIPLGPLLL). The Cytoplasmic segment spans residues 267-466 (RRGEVPPPPA…GALPEKGKAD (200 aa)). The interval 297 to 361 (ARRAAQNGDS…PQIKTMVGPR (65 aa)) is disordered. Residues 313 to 322 (VTSSTSNPSA) show a composition bias toward polar residues. The segment covering 325–345 (DGEKGATITKDDSSYSHDHSE) has biased composition (basic and acidic residues). The next 4 helical transmembrane spans lie at 467-487 (VPVWILVFGASCLVIGLWTYG), 506-525 (GFSMELGSAVTVILATRLKL), 527-547 (VSTTQCITGATVGVGLCSGTW), and 561-581 (GWFITLPVAGIISGCLMGIII).

Belongs to the inorganic phosphate transporter (PiT) (TC 2.A.20) family.

The protein localises to the cell membrane. Phosphate transport activity is competitively inhibited by vanadate and arsenate. Its function is as follows. High-affinity transporter for external inorganic phosphate. Acts probably as a sodium-phosphate symporter. Component of the high affinity phosphate transport system II (ptsII) necessary for scavenging phosphorus from the environment under conditions of limiting phosphorus. This is Phosphate-repressible phosphate permease pho-4 from Neurospora crassa (strain ATCC 24698 / 74-OR23-1A / CBS 708.71 / DSM 1257 / FGSC 987).